A 745-amino-acid chain; its full sequence is ATP-dependent zinc metalloprotease FtsH (745 aa).

Over 1–11 (MNNRRNGLFRN) the chain is Cytoplasmic. The chain crosses the membrane as a helical span at residues 12 to 32 (SLFYILMFLSLMGIIYFFFGG). Topologically, residues 33–131 (NSGSQTQNIR…VTAKAEESSG (99 aa)) are extracellular. A helical transmembrane segment spans residues 132-152 (IWVTLLMYIAPVILMLFLFYM). Topologically, residues 153 to 745 (MMGQAGQGGG…SSQDDTNSQA (593 aa)) are cytoplasmic. 227–234 (GPPGTGKT) serves as a coordination point for ATP. Residue His449 coordinates Zn(2+). Glu450 is an active-site residue. 2 residues coordinate Zn(2+): His453 and Asp525. Residues 630–673 (MPEKDSNEFPSEKAATFEESKRELERREAEKHAQNQSADDKQAD) are compositionally biased toward basic and acidic residues. Residues 630-745 (MPEKDSNEFP…SSQDDTNSQA (116 aa)) are disordered. Positions 690–704 (SESDASSEVSADSSV) are enriched in low complexity. The span at 705–745 (NSTANSATESATDSDVATSATGLPNAESATPSSQDDTNSQA) shows a compositional bias: polar residues.

In the central section; belongs to the AAA ATPase family. This sequence in the C-terminal section; belongs to the peptidase M41 family. Homohexamer. Zn(2+) serves as cofactor.

It localises to the cell membrane. Its function is as follows. Acts as a processive, ATP-dependent zinc metallopeptidase for both cytoplasmic and membrane proteins. Plays a role in the quality control of integral membrane proteins. This Lactiplantibacillus plantarum (strain ATCC BAA-793 / NCIMB 8826 / WCFS1) (Lactobacillus plantarum) protein is ATP-dependent zinc metalloprotease FtsH.